The following is a 129-amino-acid chain: Virion-associated protein (129 aa).

Coiled-coil stretches lie at residues 1 to 31 (MANLNQIQKEVSEILSDQKSMKADIKAILEL) and 38 to 59 (IKESLETVAAKIVNDLTKLIND). The tract at residues 122–129 (PAGWPNQY) is capsid binding.

It belongs to the caulimovirus ORF III family. As to quaternary structure, homotetramer, through coiled-coil domain. Homotrimer when interacts with icosehadral capsid. Interacts with capsid protein, and with Movement protein.

Its subcellular location is the virion. The protein resides in the host cell junction. It is found in the host plasmodesma. Functionally, plays a role in virus cell-to-cell and plant-to-plant transmission. Interacts with virion icosahedral capsid and movement protein, thereby facilitating virion cell-to-cell transmission through plasmodesmata opened by viral movement protein. Also interacts with aphid transmission factor, attaching the virion to aphid stylet when the animal feeds on an virus infected plant. Aphid saliva may later detach the virion, inducing release of infectious particles when the animal feeds on a new plant. The sequence is that of Virion-associated protein from Cauliflower mosaic virus (strain D/H) (CaMV).